Reading from the N-terminus, the 363-residue chain is Zinc finger CCCH domain-containing protein 53 (363 aa).

The C3H1-type zinc finger occupies 154-181; it reads KNRPKICSFYTIGQCKRGAECSFRHEMP. In terms of domain architecture, RRM spans 225–310; the sequence is KTLYVGGLNS…PPNEYSHYPS (86 aa). The segment at 281 to 348 is disordered; that stretch reads LISQQQNQHS…SYSYPMPPHQ (68 aa). Positions 283-297 are enriched in low complexity; that stretch reads SQQQNQHSQMQQYYM. A compositionally biased stretch (polar residues) spans 320-336; that stretch reads FSTQESDGSSTSENNRA.

The polypeptide is Zinc finger CCCH domain-containing protein 53 (Arabidopsis thaliana (Mouse-ear cress)).